Reading from the N-terminus, the 103-residue chain is Large ribosomal subunit protein bL21 (103 aa).

This sequence belongs to the bacterial ribosomal protein bL21 family. In terms of assembly, part of the 50S ribosomal subunit. Contacts protein L20.

Functionally, this protein binds to 23S rRNA in the presence of protein L20. This chain is Large ribosomal subunit protein bL21, found in Variovorax paradoxus (strain S110).